The chain runs to 87 residues: Probable Vpr-like protein (87 aa).

Residues 40–47 carry the Nuclear export signal motif; sequence LQRWLAML. A Nuclear localization signal motif is present at residues 48–55; the sequence is RSGRNRNK.

It localises to the virion. Its subcellular location is the host nucleus. Seems to function as a Vpr-like protein, since it mediates host cell cycle arrest in G2 phase. Cell cycle arrest creates a favorable environment for maximizing viral expression and production. This chain is Probable Vpr-like protein (tat), found in Caprine arthritis encephalitis virus (strain 63) (CAEV-63).